A 214-amino-acid polypeptide reads, in one-letter code: NADH-quinone oxidoreductase subunit C (214 aa).

This sequence belongs to the complex I 30 kDa subunit family. NDH-1 is composed of 14 different subunits. Subunits NuoB, C, D, E, F, and G constitute the peripheral sector of the complex.

It is found in the cell inner membrane. The catalysed reaction is a quinone + NADH + 5 H(+)(in) = a quinol + NAD(+) + 4 H(+)(out). NDH-1 shuttles electrons from NADH, via FMN and iron-sulfur (Fe-S) centers, to quinones in the respiratory chain. The immediate electron acceptor for the enzyme in this species is believed to be ubiquinone. Couples the redox reaction to proton translocation (for every two electrons transferred, four hydrogen ions are translocated across the cytoplasmic membrane), and thus conserves the redox energy in a proton gradient. The chain is NADH-quinone oxidoreductase subunit C from Francisella tularensis subsp. mediasiatica (strain FSC147).